Here is a 117-residue protein sequence, read N- to C-terminus: Putative cysteine proteinase inhibitor 7 (117 aa).

Residues 1–24 (MTMRTSSLLLAAVAVVAIVAGATA) form the signal peptide. The Cystatin domain maps to 28–84 (GSWEPVDINDPHVQELGRWAVAEEDRGVAAGGLTFERVTDGEKQVVAGVNYRLTLEA). Positions 71–75 (QVVAG) match the Secondary area of contact motif.

This sequence belongs to the cystatin family. Phytocystatin subfamily.

The protein resides in the secreted. In terms of biological role, specific inhibitor of cysteine proteinases. Probably involved in the regulation of endogenous processes and in defense against pests and pathogens. This is Putative cysteine proteinase inhibitor 7 from Oryza sativa subsp. japonica (Rice).